A 298-amino-acid polypeptide reads, in one-letter code: S-adenosylmethionine-dependent nucleotide dehydratase (298 aa).

A Radical SAM core domain is found at 8 to 235 (ANKELVVNWH…QRFGEIIYAE (228 aa)). Cysteine 22, cysteine 26, and cysteine 29 together coordinate [4Fe-4S] cluster.

It belongs to the radical SAM superfamily. Viperin family. It depends on [4Fe-4S] cluster as a cofactor.

The catalysed reaction is CTP + AH2 + S-adenosyl-L-methionine = 3'-deoxy-3',4'-didehydro-CTP + 5'-deoxyadenosine + L-methionine + A + H2O + H(+). It catalyses the reaction UTP + AH2 + S-adenosyl-L-methionine = 3'-deoxy-3',4'-didehydro-UTP + 5'-deoxyadenosine + L-methionine + A + H2O + H(+). Expression of pVip8 in E.coli (strain MG1655) confers resistance to phages lambda, P1, SECphi8 and T7. Prevents culture collapse upon infection with T7. Catalyzes the conversion of cytidine triphosphate (CTP) to 3'-deoxy-3',4'-didehydro-CTP (ddhCTP) and uridine triphosphate (UTP) to 3'-deoxy-3',4'-didehydro-UTP (ddhUTP), probably via a SAM-dependent radical mechanism. The modified nucleotides repress transcription from T7 RNA polymerase-directed genes (possibly by acting as chain terminators), strongly suggesting these nucleotides block viral polymerase transcription. The polypeptide is S-adenosylmethionine-dependent nucleotide dehydratase (Psychrobacter lutiphocae (strain DSM 21542 / CCUG 56590 / IMMIB L-1110)).